The sequence spans 213 residues: Probable nicotinate-nucleotide adenylyltransferase (213 aa).

The disordered stretch occupies residues 194-213 (RKPNNGEAKDGDVKDEEAVR). Basic and acidic residues predominate over residues 200–213 (EAKDGDVKDEEAVR).

The protein belongs to the NadD family.

The catalysed reaction is nicotinate beta-D-ribonucleotide + ATP + H(+) = deamido-NAD(+) + diphosphate. The protein operates within cofactor biosynthesis; NAD(+) biosynthesis; deamido-NAD(+) from nicotinate D-ribonucleotide: step 1/1. Catalyzes the reversible adenylation of nicotinate mononucleotide (NaMN) to nicotinic acid adenine dinucleotide (NaAD). In Mycolicibacterium smegmatis (strain ATCC 700084 / mc(2)155) (Mycobacterium smegmatis), this protein is Probable nicotinate-nucleotide adenylyltransferase.